Reading from the N-terminus, the 364-residue chain is MTIASTASPVPAAAGLDRQSRNRRALRLWLGLVILALFALVLVGGATRLTNSGLSITQWKPIHGVIPPLNAAEWEEEFKLYQQIPQYELVNKGMTVEAFKTIFWWEWAHRFLARSIGVIFALPLVFFWATGRIEKRLRWPLVGILALGGFQGFIGWWMVSSGLSERTEVSQYRLATHLVTACLIFSACVWVMRGLARHSADPAPTAHSRHWAIALLCLVLFQIYLGALVAGLDAGMSYNTWPLMDGALIPGDLLVQQPVWLNFFENPKTVQFVHRIGAYTVLLVALYHMVSSLRAAPGTTHARRSVVLFAIVCCQAVLGISALLLQVPLDAALAHQGGALILLGFTVAHLRGFYGAYPLPKPVA.

Helical transmembrane passes span 25-45 (ALRLWLGLVILALFALVLVGG), 111-131 (FLARSIGVIFALPLVFFWATG), 139-159 (WPLVGILALGGFQGFIGWWMV), 174-194 (LATHLVTACLIFSACVWVMRG), 212-232 (AIALLCLVLFQIYLGALVAGL), 270-290 (VQFVHRIGAYTVLLVALYHMV), 305-325 (SVVLFAIVCCQAVLGISALLL), and 327-347 (VPLDAALAHQGGALILLGFTV). Residue His-274 participates in heme binding. Heme is bound at residue His-335.

This sequence belongs to the COX15/CtaA family. Type 2 subfamily. In terms of assembly, interacts with CtaB. Heme b serves as cofactor.

The protein resides in the cell membrane. The catalysed reaction is Fe(II)-heme o + 2 A + H2O = Fe(II)-heme a + 2 AH2. Its pathway is porphyrin-containing compound metabolism; heme A biosynthesis; heme A from heme O: step 1/1. Catalyzes the conversion of heme O to heme A by two successive hydroxylations of the methyl group at C8. The first hydroxylation forms heme I, the second hydroxylation results in an unstable dihydroxymethyl group, which spontaneously dehydrates, resulting in the formyl group of heme A. This chain is Heme A synthase, found in Allorhizobium ampelinum (strain ATCC BAA-846 / DSM 112012 / S4) (Agrobacterium vitis (strain S4)).